The following is a 1240-amino-acid chain: DNA polymerase II large subunit (1240 aa).

This sequence belongs to the archaeal DNA polymerase II family. Heterodimer of a large subunit and a small subunit.

The enzyme catalyses DNA(n) + a 2'-deoxyribonucleoside 5'-triphosphate = DNA(n+1) + diphosphate. It catalyses the reaction Exonucleolytic cleavage in the 3'- to 5'-direction to yield nucleoside 5'-phosphates.. Possesses two activities: a DNA synthesis (polymerase) and an exonucleolytic activity that degrades single-stranded DNA in the 3'- to 5'-direction. Has a template-primer preference which is characteristic of a replicative DNA polymerase. This Methanopyrus kandleri (strain AV19 / DSM 6324 / JCM 9639 / NBRC 100938) protein is DNA polymerase II large subunit.